Here is a 1700-residue protein sequence, read N- to C-terminus: Probable serine/threonine-protein kinase ifkC (1700 aa).

The disordered stretch occupies residues 1-25 (MPPKPKQKAKQPSQQPPPPPPPAAA). Residues 14-23 (QQPPPPPPPA) are compositionally biased toward pro residues. Positions 74–197 (MELEALQAIF…EIAKDFLNEN (124 aa)) constitute an RWD domain. Positions 454 to 463 (GLKKSPSTFE) are enriched in polar residues. A disordered region spans residues 454 to 488 (GLKKSPSTFEYSGEGGGGGVGGGSSQKTINPHQQS). Over residues 466 to 477 (GEGGGGGVGGGS) the composition is skewed to gly residues. Polar residues predominate over residues 479 to 488 (QKTINPHQQS). The Protein kinase domain occupies 494–1027 (FEEIQLLGRG…AQQLLQSELM (534 aa)). ATP is bound by residues 500-508 (LGRGGFGQV) and K523. Disordered regions lie at residues 568 to 639 (LTND…ENND) and 689 to 760 (GNNT…SSSK). Residues 572 to 639 (NSDDDDDDDD…SEFESEENND (68 aa)) are compositionally biased toward acidic residues. A compositionally biased stretch (low complexity) spans 697-735 (SSNQHLQQQQQQNQSQQQKKQPQQNQSQQQKKLKNSNSK). Residues 736 to 752 (SKSKSKSKSKSKSKSNS) show a composition bias toward basic residues. Residue D822 is the Proton acceptor of the active site. Composition is skewed to low complexity over residues 850–875 (TSTL…SSNS), 1135–1158 (NNSS…NTNS), 1230–1240 (SSNGNSNNNNS), and 1509–1531 (NNSN…SYNN). 4 disordered regions span residues 850–901 (TSTL…EVEG), 1134–1160 (FNNS…NSVV), 1216–1253 (KHHH…SNTT), and 1507–1531 (NLNN…SYNN).

The protein belongs to the protein kinase superfamily. Ser/Thr protein kinase family. GCN2 subfamily.

It carries out the reaction L-seryl-[protein] + ATP = O-phospho-L-seryl-[protein] + ADP + H(+). It catalyses the reaction L-threonyl-[protein] + ATP = O-phospho-L-threonyl-[protein] + ADP + H(+). The chain is Probable serine/threonine-protein kinase ifkC (ifkC) from Dictyostelium discoideum (Social amoeba).